The chain runs to 229 residues: Orotidine 5'-phosphate decarboxylase (229 aa).

Substrate is bound by residues aspartate 11, lysine 33, 60-69, threonine 119, arginine 180, glutamine 189, glycine 209, and arginine 210; that span reads DLKFHDIPNT. Lysine 62 (proton donor) is an active-site residue.

It belongs to the OMP decarboxylase family. Type 1 subfamily. In terms of assembly, homodimer.

The enzyme catalyses orotidine 5'-phosphate + H(+) = UMP + CO2. It functions in the pathway pyrimidine metabolism; UMP biosynthesis via de novo pathway; UMP from orotate: step 2/2. Catalyzes the decarboxylation of orotidine 5'-monophosphate (OMP) to uridine 5'-monophosphate (UMP). In Dichelobacter nodosus (strain VCS1703A), this protein is Orotidine 5'-phosphate decarboxylase.